We begin with the raw amino-acid sequence, 114 residues long: Large ribosomal subunit protein bL19 (114 aa).

The protein belongs to the bacterial ribosomal protein bL19 family.

In terms of biological role, this protein is located at the 30S-50S ribosomal subunit interface and may play a role in the structure and function of the aminoacyl-tRNA binding site. The chain is Large ribosomal subunit protein bL19 from Lactococcus lactis subsp. lactis (strain IL1403) (Streptococcus lactis).